The sequence spans 226 residues: Deoxyribose-phosphate aldolase (226 aa).

Aspartate 96 functions as the Proton donor/acceptor in the catalytic mechanism. Catalysis depends on lysine 157, which acts as the Schiff-base intermediate with acetaldehyde. Lysine 185 serves as the catalytic Proton donor/acceptor.

Belongs to the DeoC/FbaB aldolase family. DeoC type 1 subfamily.

The protein localises to the cytoplasm. The enzyme catalyses 2-deoxy-D-ribose 5-phosphate = D-glyceraldehyde 3-phosphate + acetaldehyde. It functions in the pathway carbohydrate degradation; 2-deoxy-D-ribose 1-phosphate degradation; D-glyceraldehyde 3-phosphate and acetaldehyde from 2-deoxy-alpha-D-ribose 1-phosphate: step 2/2. Its function is as follows. Catalyzes a reversible aldol reaction between acetaldehyde and D-glyceraldehyde 3-phosphate to generate 2-deoxy-D-ribose 5-phosphate. This is Deoxyribose-phosphate aldolase from Trichormus variabilis (strain ATCC 29413 / PCC 7937) (Anabaena variabilis).